The primary structure comprises 387 residues: Phosphoglycerate kinase (387 aa).

Substrate contacts are provided by residues 21–23, Arg36, 59–62, Arg113, and Arg146; these read DLN and HLGR. Residues Lys197, Glu314, and 340-343 contribute to the ATP site; that span reads GGDT.

The protein belongs to the phosphoglycerate kinase family. Monomer.

The protein localises to the cytoplasm. The catalysed reaction is (2R)-3-phosphoglycerate + ATP = (2R)-3-phospho-glyceroyl phosphate + ADP. It functions in the pathway carbohydrate degradation; glycolysis; pyruvate from D-glyceraldehyde 3-phosphate: step 2/5. This is Phosphoglycerate kinase (pgk) from Vibrio cholerae serotype O1 (strain ATCC 39541 / Classical Ogawa 395 / O395).